Here is a 159-residue protein sequence, read N- to C-terminus: Phosphopantetheine adenylyltransferase (159 aa).

Substrate is bound at residue threonine 10. Residues 10–11 (TF) and histidine 18 contribute to the ATP site. Substrate contacts are provided by lysine 42, methionine 74, and arginine 88. ATP is bound by residues 89–91 (GLR), glutamate 99, and 124–130 (WSFISSS).

This sequence belongs to the bacterial CoaD family. In terms of assembly, homohexamer. The cofactor is Mg(2+).

The protein resides in the cytoplasm. It catalyses the reaction (R)-4'-phosphopantetheine + ATP + H(+) = 3'-dephospho-CoA + diphosphate. Its pathway is cofactor biosynthesis; coenzyme A biosynthesis; CoA from (R)-pantothenate: step 4/5. Its function is as follows. Reversibly transfers an adenylyl group from ATP to 4'-phosphopantetheine, yielding dephospho-CoA (dPCoA) and pyrophosphate. This Citrobacter koseri (strain ATCC BAA-895 / CDC 4225-83 / SGSC4696) protein is Phosphopantetheine adenylyltransferase.